Reading from the N-terminus, the 155-residue chain is Protein SprT-like (155 aa).

A SprT-like domain is found at 7–145; that stretch reads QRHMEEVSLQ…GSCGGKLIQI (139 aa). A Zn(2+)-binding site is contributed by His-67. Residue Glu-68 is part of the active site. His-71 serves as a coordination point for Zn(2+).

This sequence belongs to the SprT family. Zn(2+) serves as cofactor.

It localises to the cytoplasm. The polypeptide is Protein SprT-like (Listeria monocytogenes serotype 4a (strain HCC23)).